Reading from the N-terminus, the 451-residue chain is Eukaryotic translation initiation factor 3 subunit E (451 aa).

Residues 256–425 (TDLFFSPAYI…GTVIMNHPPQ (170 aa)) enclose the PCI domain.

This sequence belongs to the eIF-3 subunit E family. In terms of assembly, component of the eukaryotic translation initiation factor 3 (eIF-3) complex.

The protein resides in the cytoplasm. In terms of biological role, component of the eukaryotic translation initiation factor 3 (eIF-3) complex, which is involved in protein synthesis of a specialized repertoire of mRNAs and, together with other initiation factors, stimulates binding of mRNA and methionyl-tRNAi to the 40S ribosome. The eIF-3 complex specifically targets and initiates translation of a subset of mRNAs involved in cell proliferation. This chain is Eukaryotic translation initiation factor 3 subunit E (int6), found in Aspergillus fumigatus (strain CBS 144.89 / FGSC A1163 / CEA10) (Neosartorya fumigata).